The sequence spans 483 residues: Regulatory protein ViaA (483 aa).

This sequence belongs to the ViaA family. In terms of assembly, homodimer. Interacts with RavA.

The protein resides in the cytoplasm. Functionally, component of the RavA-ViaA chaperone complex, which may act on the membrane to optimize the function of some of the respiratory chains. ViaA stimulates the ATPase activity of RavA. This chain is Regulatory protein ViaA, found in Shigella boydii serotype 18 (strain CDC 3083-94 / BS512).